A 124-amino-acid polypeptide reads, in one-letter code: Glutaredoxin-2 (124 aa).

A disulfide bond links cysteine 13 and cysteine 16.

It belongs to the glutaredoxin family. In terms of assembly, homodimer.

Its subcellular location is the host cytoplasm. Glutaredoxin necessary for virion morphogenesis and virus replication. Functions as a thiol-disulfide transfer protein between membrane-associated OPG128 and substrates OPG095 or OPG053. The complete pathway for formation of disulfide bonds in intracellular virion membrane proteins sequentially involves oxidation of OPG072, OPG128 and OPG088. Exhibit thioltransferase and dehydroascorbate reductase activities in vitro. The polypeptide is Glutaredoxin-2 (OPG088) (Camelus).